A 129-amino-acid polypeptide reads, in one-letter code: Large ribosomal subunit protein bL17 (129 aa).

Belongs to the bacterial ribosomal protein bL17 family. Part of the 50S ribosomal subunit. Contacts protein L32.

This Stutzerimonas stutzeri (strain A1501) (Pseudomonas stutzeri) protein is Large ribosomal subunit protein bL17.